Here is a 429-residue protein sequence, read N- to C-terminus: Protein S-Myc (429 aa).

Tyrosine 36 carries the post-translational modification Phosphotyrosine; by Tyr-kinases. Residues 301–325 (PLPYAEDARPLKKPRSQDPLGPLKC) are disordered. Positions 346–398 (ERRRNHNRMERQRRDIMRSSFLNLRDLVPELVHNEKAAKVVILKKATEYIHTL) constitute a bHLH domain. The segment at 398–419 (LQTDESKLLVEREKLYERKQQL) is leucine-zipper.

As to quaternary structure, efficient DNA binding requires dimerization with another bHLH protein.

The protein resides in the nucleus. In terms of biological role, has apoptosis-inducing activity. The polypeptide is Protein S-Myc (Mycs) (Rattus norvegicus (Rat)).